Reading from the N-terminus, the 138-residue chain is MRHRKIGRKLNCKSDHRNAIFKNMACSLILNEIIKTTLAKAKELRRIVEPMITLSKIDTVAHRRLLFSRIRNNEVIAKLFKKIGPIFYNRSGGYTRILKCGFRFGDKAPMAYIELVDRVRKSKEKKKLSSNNNLIKNK.

It belongs to the bacterial ribosomal protein bL17 family. Part of the 50S ribosomal subunit. Contacts protein L32.

The sequence is that of Large ribosomal subunit protein bL17 from Buchnera aphidicola subsp. Schizaphis graminum (strain Sg).